An 84-amino-acid chain; its full sequence is Small ribosomal subunit protein bS20 (84 aa).

The protein belongs to the bacterial ribosomal protein bS20 family.

Binds directly to 16S ribosomal RNA. This is Small ribosomal subunit protein bS20 from Porphyromonas gingivalis (strain ATCC 33277 / DSM 20709 / CIP 103683 / JCM 12257 / NCTC 11834 / 2561).